Reading from the N-terminus, the 272-residue chain is 4-hydroxy-tetrahydrodipicolinate reductase (272 aa).

NAD(+)-binding positions include Gly-11 to Met-16 and Glu-37. Arg-38 serves as a coordination point for NADP(+). NAD(+) contacts are provided by residues Gly-101–Thr-103 and Ala-125–Met-128. The active-site Proton donor/acceptor is the His-158. (S)-2,3,4,5-tetrahydrodipicolinate is bound at residue His-159. Lys-162 serves as the catalytic Proton donor. Position 168 to 169 (Gly-168 to Thr-169) interacts with (S)-2,3,4,5-tetrahydrodipicolinate.

Belongs to the DapB family.

It localises to the cytoplasm. The catalysed reaction is (S)-2,3,4,5-tetrahydrodipicolinate + NAD(+) + H2O = (2S,4S)-4-hydroxy-2,3,4,5-tetrahydrodipicolinate + NADH + H(+). It catalyses the reaction (S)-2,3,4,5-tetrahydrodipicolinate + NADP(+) + H2O = (2S,4S)-4-hydroxy-2,3,4,5-tetrahydrodipicolinate + NADPH + H(+). Its pathway is amino-acid biosynthesis; L-lysine biosynthesis via DAP pathway; (S)-tetrahydrodipicolinate from L-aspartate: step 4/4. Catalyzes the conversion of 4-hydroxy-tetrahydrodipicolinate (HTPA) to tetrahydrodipicolinate. This Roseobacter denitrificans (strain ATCC 33942 / OCh 114) (Erythrobacter sp. (strain OCh 114)) protein is 4-hydroxy-tetrahydrodipicolinate reductase.